A 289-amino-acid polypeptide reads, in one-letter code: Phosphatidylglycerol--prolipoprotein diacylglyceryl transferase (289 aa).

The next 4 helical transmembrane spans lie at 21-41 (IGPL…LLGI), 53-73 (IDPN…IPAA), 95-115 (IWHG…ALIL), and 122-142 (IPIW…QAIG). Arg143 is a binding site for a 1,2-diacyl-sn-glycero-3-phospho-(1'-sn-glycerol). A run of 3 helical transmembrane segments spans residues 182–202 (PTFL…IWLF), 215–235 (GVMT…IEGL), and 247–267 (IAQM…VWIY).

This sequence belongs to the Lgt family.

It localises to the cell inner membrane. The enzyme catalyses L-cysteinyl-[prolipoprotein] + a 1,2-diacyl-sn-glycero-3-phospho-(1'-sn-glycerol) = an S-1,2-diacyl-sn-glyceryl-L-cysteinyl-[prolipoprotein] + sn-glycerol 1-phosphate + H(+). The protein operates within protein modification; lipoprotein biosynthesis (diacylglyceryl transfer). In terms of biological role, catalyzes the transfer of the diacylglyceryl group from phosphatidylglycerol to the sulfhydryl group of the N-terminal cysteine of a prolipoprotein, the first step in the formation of mature lipoproteins. The polypeptide is Phosphatidylglycerol--prolipoprotein diacylglyceryl transferase (Synechococcus elongatus (strain ATCC 33912 / PCC 7942 / FACHB-805) (Anacystis nidulans R2)).